The following is a 356-amino-acid chain: Holliday junction branch migration complex subunit RuvB (356 aa).

The segment at 4 to 192 is large ATPase domain (RuvB-L); the sequence is DDTTDATADE…FGFTAHMEFY (189 aa). Residues Leu-31, Arg-32, Gly-73, Lys-76, Thr-77, Thr-78, 139–141, Arg-182, Tyr-192, and Arg-229 contribute to the ATP site; that span reads EDF. Position 77 (Thr-77) interacts with Mg(2+). Positions 193 to 263 are small ATPAse domain (RuvB-S); it reads EPHELERVIH…IAAAALKVYE (71 aa). Positions 266-356 are head domain (RuvB-H); it reads ARGLDRLDRG…GNGQGDLFGA (91 aa). DNA is bound by residues Arg-302, Arg-321, and Arg-326.

Belongs to the RuvB family. In terms of assembly, homohexamer. Forms an RuvA(8)-RuvB(12)-Holliday junction (HJ) complex. HJ DNA is sandwiched between 2 RuvA tetramers; dsDNA enters through RuvA and exits via RuvB. An RuvB hexamer assembles on each DNA strand where it exits the tetramer. Each RuvB hexamer is contacted by two RuvA subunits (via domain III) on 2 adjacent RuvB subunits; this complex drives branch migration. In the full resolvosome a probable DNA-RuvA(4)-RuvB(12)-RuvC(2) complex forms which resolves the HJ.

It localises to the cytoplasm. The enzyme catalyses ATP + H2O = ADP + phosphate + H(+). Its function is as follows. The RuvA-RuvB-RuvC complex processes Holliday junction (HJ) DNA during genetic recombination and DNA repair, while the RuvA-RuvB complex plays an important role in the rescue of blocked DNA replication forks via replication fork reversal (RFR). RuvA specifically binds to HJ cruciform DNA, conferring on it an open structure. The RuvB hexamer acts as an ATP-dependent pump, pulling dsDNA into and through the RuvAB complex. RuvB forms 2 homohexamers on either side of HJ DNA bound by 1 or 2 RuvA tetramers; 4 subunits per hexamer contact DNA at a time. Coordinated motions by a converter formed by DNA-disengaged RuvB subunits stimulates ATP hydrolysis and nucleotide exchange. Immobilization of the converter enables RuvB to convert the ATP-contained energy into a lever motion, pulling 2 nucleotides of DNA out of the RuvA tetramer per ATP hydrolyzed, thus driving DNA branch migration. The RuvB motors rotate together with the DNA substrate, which together with the progressing nucleotide cycle form the mechanistic basis for DNA recombination by continuous HJ branch migration. Branch migration allows RuvC to scan DNA until it finds its consensus sequence, where it cleaves and resolves cruciform DNA. The polypeptide is Holliday junction branch migration complex subunit RuvB (Streptomyces avermitilis (strain ATCC 31267 / DSM 46492 / JCM 5070 / NBRC 14893 / NCIMB 12804 / NRRL 8165 / MA-4680)).